Consider the following 465-residue polypeptide: Paired box protein Pax-8 (465 aa).

A DNA-binding region (paired) is located at residues 26–152 (GHGGLNQLGG…SSINRIIRTK (127 aa)). The tract at residues 29 to 85 (GLNQLGGAFVNGRPLPEVVRQRIVDLAHQGVRPCDISRQLRVSHGCVSKILGRYYET) is PAI subdomain. Positions 104–152 (KVVEKIGDYKRQNPTMFAWEIRDRLLTDGVCDNDTVPSVSSINRIIRTK) are RED subdomain. The tract at residues 206–227 (PSADGKRKLDDSDQESCRLSID) is disordered.

In terms of tissue distribution, expression starts at late gastrula stages in cells fated to become the primordia of the otic system and the pronephric kidney. Expression is maintained in these two structures through late tailbud stages. Does not appear to be expressed in the thyroid gland.

Its subcellular location is the nucleus. Its function is as follows. Probable transcription factor. Involved in kidney development, acting synergistically with lhx1/lim-1 to establish the pronephric primordium in late gastrulae/early neurulae. The sequence is that of Paired box protein Pax-8 from Xenopus laevis (African clawed frog).